The following is a 123-amino-acid chain: Chaperone protein SycN (123 aa).

Interacts with YscB to form a complex which specifically binds to YopN.

It is found in the cytoplasm. The protein resides in the cell inner membrane. Its function is as follows. Functions as a specific chaperone for YopN. It could facilitate the secretion and the subsequent translocation of YopN. The sequence is that of Chaperone protein SycN (sycN) from Yersinia enterocolitica.